The following is a 164-amino-acid chain: NADH-quinone oxidoreductase subunit I (164 aa).

4Fe-4S ferredoxin-type domains lie at 55-85 (LRRY…IDAE) and 95-124 (TRYD…EGPN). 8 residues coordinate [4Fe-4S] cluster: C65, C68, C71, C75, C104, C107, C110, and C114.

This sequence belongs to the complex I 23 kDa subunit family. NDH-1 is composed of 14 different subunits. Subunits NuoA, H, J, K, L, M, N constitute the membrane sector of the complex. Requires [4Fe-4S] cluster as cofactor.

It localises to the cell inner membrane. It catalyses the reaction a quinone + NADH + 5 H(+)(in) = a quinol + NAD(+) + 4 H(+)(out). Its function is as follows. NDH-1 shuttles electrons from NADH, via FMN and iron-sulfur (Fe-S) centers, to quinones in the respiratory chain. The immediate electron acceptor for the enzyme in this species is believed to be ubiquinone. Couples the redox reaction to proton translocation (for every two electrons transferred, four hydrogen ions are translocated across the cytoplasmic membrane), and thus conserves the redox energy in a proton gradient. The chain is NADH-quinone oxidoreductase subunit I from Ruegeria pomeroyi (strain ATCC 700808 / DSM 15171 / DSS-3) (Silicibacter pomeroyi).